We begin with the raw amino-acid sequence, 570 residues long: Sulfite reductase [NADPH] hemoprotein beta-component (570 aa).

4 residues coordinate [4Fe-4S] cluster: Cys-434, Cys-440, Cys-479, and Cys-483. Position 483 (Cys-483) interacts with siroheme.

This sequence belongs to the nitrite and sulfite reductase 4Fe-4S domain family. As to quaternary structure, alpha(8)-beta(8). The alpha component is a flavoprotein, the beta component is a hemoprotein. Siroheme is required as a cofactor. It depends on [4Fe-4S] cluster as a cofactor.

It catalyses the reaction hydrogen sulfide + 3 NADP(+) + 3 H2O = sulfite + 3 NADPH + 4 H(+). The protein operates within sulfur metabolism; hydrogen sulfide biosynthesis; hydrogen sulfide from sulfite (NADPH route): step 1/1. Component of the sulfite reductase complex that catalyzes the 6-electron reduction of sulfite to sulfide. This is one of several activities required for the biosynthesis of L-cysteine from sulfate. The sequence is that of Sulfite reductase [NADPH] hemoprotein beta-component from Salmonella dublin (strain CT_02021853).